Consider the following 342-residue polypeptide: D-erythrose-4-phosphate dehydrogenase (342 aa).

Position 12–13 (12–13 (RI)) interacts with NAD(+). Residues 154 to 156 (SCT), R200, 213 to 214 (TK), and R236 contribute to the substrate site. The active-site Nucleophile is the C155. N318 contacts NAD(+).

The protein belongs to the glyceraldehyde-3-phosphate dehydrogenase family. Epd subfamily. In terms of assembly, homotetramer.

The protein localises to the cytoplasm. The catalysed reaction is D-erythrose 4-phosphate + NAD(+) + H2O = 4-phospho-D-erythronate + NADH + 2 H(+). It functions in the pathway cofactor biosynthesis; pyridoxine 5'-phosphate biosynthesis; pyridoxine 5'-phosphate from D-erythrose 4-phosphate: step 1/5. Catalyzes the NAD-dependent conversion of D-erythrose 4-phosphate to 4-phosphoerythronate. This is D-erythrose-4-phosphate dehydrogenase from Klebsiella pneumoniae subsp. pneumoniae (strain ATCC 700721 / MGH 78578).